The following is a 326-amino-acid chain: Vitamin B12 import system permease protein BtuC (326 aa).

Transmembrane regions (helical) follow at residues 15–35, 61–81, 88–108, 112–132, 146–166, 184–204, 240–260, 274–294, and 302–322; these read WLLSLSLLVLLATLLSLCAGE, LAVLLVGAALALSGAVMQALF, PGLLGVSNGAGVGLIAAVLLG, LPGWALGLCAIAGALIITLIL, LLAGVALGIICSALMTWAIYF, GGVDWQQSWLMIALIPVLIWI, GWMVGVSVAMAGAIGFIGLVI, VLLPGCALAGAIALLLADVVA, and ELPIGVVTATLGAPVFIWLLL.

Belongs to the binding-protein-dependent transport system permease family. FecCD subfamily. As to quaternary structure, the complex is composed of two ATP-binding proteins (BtuD), two transmembrane proteins (BtuC) and a solute-binding protein (BtuF).

It is found in the cell inner membrane. Functionally, part of the ABC transporter complex BtuCDF involved in vitamin B12 import. Involved in the translocation of the substrate across the membrane. This Salmonella enteritidis PT4 (strain P125109) protein is Vitamin B12 import system permease protein BtuC.